Consider the following 449-residue polypeptide: Phosphoglucosamine mutase (449 aa).

Ser102 functions as the Phosphoserine intermediate in the catalytic mechanism. Mg(2+) is bound by residues Ser102, Asp243, Asp245, and Asp247. Residue Ser102 is modified to Phosphoserine.

Belongs to the phosphohexose mutase family. Mg(2+) serves as cofactor. Post-translationally, activated by phosphorylation.

It catalyses the reaction alpha-D-glucosamine 1-phosphate = D-glucosamine 6-phosphate. Functionally, catalyzes the conversion of glucosamine-6-phosphate to glucosamine-1-phosphate. The polypeptide is Phosphoglucosamine mutase (Maricaulis maris (strain MCS10) (Caulobacter maris)).